The primary structure comprises 1052 residues: Germline survival defective-1 (1052 aa).

An N-terminal signal peptide occupies residues 1–25 (MRCLISYLFHSFLIFLKFIRSDVTA). Disordered regions lie at residues 41 to 320 (LMKS…DPKN), 478 to 543 (VNGI…QSVP), 667 to 689 (PSSQAVGDENDTDSDHESEEEFE), 933 to 965 (KQTLLSKKGDHRTRSDGEGSQQNGGTSSSNSYA), and 1033 to 1052 (SNNTGGVNGNSGGGNQNSNF). Residues 67-145 (ATATAAATTQ…SSTSSTSQQT (79 aa)) are compositionally biased toward low complexity. Over residues 163-172 (TSNTANSQSG) the composition is skewed to polar residues. The segment covering 178-190 (TNKDRPKEKEKNT) has biased composition (basic and acidic residues). The span at 244 to 279 (NAKSSGFLSNSSLSSAGQISASSAPPVSTTPTAIPI) shows a compositional bias: low complexity. The segment covering 305–320 (KRDEEPMPYKSTDPKN) has biased composition (basic and acidic residues). Residues 424 to 732 (QHPPGLPPLL…QIEKNDNLFS (309 aa)) form a gld-4 binding region. The span at 480–514 (GISNNIPSDRQQLDSKPNTARGSSGNINQSNTTSP) shows a compositional bias: polar residues. Positions 674-689 (DENDTDSDHESEEEFE) are enriched in acidic residues. The interval 892–1052 (PIELPVNMQP…SGGGNQNSNF (161 aa)) is gld-3 binding. Residues 950–963 (EGSQQNGGTSSSNS) are compositionally biased toward low complexity. Residues 1038-1052 (GVNGNSGGGNQNSNF) show a composition bias toward gly residues.

Isoform C interacts (via C-terminus) with gld-3 isoform A (via C-terminus) in an RNA-independent manner. Isoform C interacts with gld-4. Expressed in the germline (at protein level). In the early embryo is expressed in all cells, then becomes gradually restricted to the germ cell lineage and enriches in P granules (at protein level). In adult hermaphrodites, is expressed in the mitotic region, accumulates during early stages of meiotic prophase I and is slightly less abundant in maturing oocytes (at protein level).

The protein resides in the cytoplasm. It is found in the cytoplasmic granule. Required maternally for germline survival by forming a maternal complex with gld-3. During hermaphrodite development forms a complex with gld-3 which promotes the sperm/oocyte switch freeing the translational repressor fbf to turn off sperm promoting factors. Required for proper oocyte differentiation and oogenic meiotic arrest. Stimulates the enzymatic activity of gld-4 and together they prevent gld-1 mRNA degradation. The sequence is that of Germline survival defective-1 from Caenorhabditis elegans.